Reading from the N-terminus, the 574-residue chain is Arginine--tRNA ligase (574 aa).

The short motif at 121–131 is the 'HIGH' region element; the sequence is PNIAKEMHIGH.

This sequence belongs to the class-I aminoacyl-tRNA synthetase family. Monomer.

Its subcellular location is the cytoplasm. It carries out the reaction tRNA(Arg) + L-arginine + ATP = L-arginyl-tRNA(Arg) + AMP + diphosphate. The chain is Arginine--tRNA ligase from Buchnera aphidicola subsp. Acyrthosiphon pisum (strain Tuc7).